We begin with the raw amino-acid sequence, 240 residues long: uncharacterized protein (240 aa).

Transmembrane regions (helical) follow at residues 12–32, 66–86, and 89–109; these read ICIH…ILMS, IQVL…FVLV, and ISGY…IYFF. N-linked (GlcNAc...) asparagine; by host glycans are attached at residues Asn-129 and Asn-157.

It localises to the membrane. This is an uncharacterized protein from Acanthamoeba polyphaga mimivirus (APMV).